Reading from the N-terminus, the 301-residue chain is MGRAREMGWMAAGLMIGAGACYCMYKLTMGRDEGNELENEEEDEWDDEQDLDEEEADIWFDFTAMARPWSEDGEWDEPGAPGGTEDRRSGGGKANRAHPTKQRPFPYEHKNIWGVQSFQTFPCALNLTKCAFSQGKKMFTESTIAGFSLTHNVSRHLSSLSVVGSRSPTPQPTVREKALDVPEHPNSSIENQDQIKMYIDEVCRDAVFCCCKSFLQQAGLGLLISMTVINNMLAKSLSDPKFPLLSEGSGCAKVQGLEAQMSLPEKPVLAEEVLAAQMLFSFMCLFTRSGSREMLVEAISP.

The mitochondrion outer membrane (MOM)-targeting sequence stretch occupies residues 1–6 (MGRARE). Residues 1–7 (MGRAREM) are Mitochondrial intermembrane-facing. The helical; Signal-anchor transmembrane segment at 8–25 (GWMAAGLMIGAGACYCMY) threads the bilayer. Residues 26-36 (KLTMGRDEGNE) are mitochondrion outer membrane (MOM)-targeting sequence. The Cytoplasmic segment spans residues 26–301 (KLTMGRDEGN…REMLVEAISP (276 aa)). The segment at 70-105 (SEDGEWDEPGAPGGTEDRRSGGGKANRAHPTKQRPF) is disordered.

Belongs to the eutherian X-chromosome-specific Armcx family.

Its subcellular location is the mitochondrion. It localises to the mitochondrion outer membrane. Its function is as follows. May regulate the dynamics and distribution of mitochondria in neural cells. This chain is Protein ARMCX6 (Armcx6), found in Rattus norvegicus (Rat).